The primary structure comprises 955 residues: Reversion-inducing cysteine-rich protein with Kazal motifs (955 aa).

Positions 1–22 are cleaved as a signal peptide; sequence MSGCLQILTVLLCCRFWALVFS. A Knot 1 repeat occupies 28 to 75; that stretch reads CVHHAADIPRCRDACEQLASIRSESRLRHLLHRLPSYCPETLSELWIC. The segment at 28 to 326 is 5 X Knot repeats; the sequence is CVHHAADIPR…NPVEMDLITC (299 aa). Asparagine 77 carries an N-linked (GlcNAc...) asparagine glycan. Knot repeat units lie at residues 95-132 and 142-188; these read CCELAISAECRRDCKQASSKNDISKVCKKDTENPLYSC and CCSY…LILC. Asparagine 191 carries an N-linked (GlcNAc...) asparagine glycan. Knot repeat units lie at residues 207 to 254 and 282 to 326; these read CCDR…LWQC and CCFK…LITC. 2 N-linked (GlcNAc...) asparagine glycosylation sites follow: asparagine 287 and asparagine 375. Kazal-like domains are found at residues 615–661, 686–741, and 742–778; these read LFTG…SCRS, DLSE…HCQD, and ACRRPREVCAHNGESYSTVCEAFSERVAVDYQGRCHA. Disulfide bonds link cysteine 621-cysteine 646, cysteine 623-cysteine 642, cysteine 631-cysteine 659, cysteine 704-cysteine 724, and cysteine 713-cysteine 739. A lipid anchor (GPI-anchor amidated serine) is attached at serine 931. Residues 932 to 955 constitute a propeptide that is removed on maturation; sequence SCVSISVCVLLLLCSLILTLTSDL.

The protein belongs to the RECK family. As to quaternary structure, interacts (via knot repeats) with wnt7a (via disordered linker region); the interaction is direct. Interacts (via knot repeats) with wnt7b (via disordered linker region); the interaction is direct. Interacts with adgra2; the interaction is direct. As to expression, expressed in the cerebral endothelium.

It is found in the cell membrane. In terms of biological role, functions together with adgra2 to enable brain endothelial cells to selectively respond to Wnt7 signals (wnt7a or wnt7b). Plays a key role in Wnt7-specific responses: required for central nervous system (CNS) angiogenesis and blood-brain barrier regulation. Acts as a Wnt7-specific coactivator of canonical Wnt signaling by decoding Wnt ligands: acts by interacting specifically with the disordered linker region of Wnt7, thereby conferring ligand selectivity for Wnt7. Adgra2 is then required to deliver reck-bound Wnt7 to frizzled by assembling a higher-order RECK-ADGRA2-Fzd-LRP5-LRP6 complex. Also acts as a serine protease inhibitor. The sequence is that of Reversion-inducing cysteine-rich protein with Kazal motifs from Danio rerio (Zebrafish).